The primary structure comprises 92 residues: FMRFamide-like neuropeptides 16 (92 aa).

A signal peptide spans 1–24; it reads MNFSGFEFSSIVAFFLLILQLSTA. Positions 25–55 are excised as a propeptide; that stretch reads AVLPADYAYGVADEMSALPDSGSLFAEQRPS. Phe64, Phe74, and Phe84 each carry phenylalanine amide. The propeptide occupies 87–92; sequence SAPFEQ.

The protein belongs to the FARP (FMRFamide related peptide) family. In terms of tissue distribution, each flp gene is expressed in a distinct set of neurons.

Its subcellular location is the secreted. Its function is as follows. FMRFamides and FMRFamide-like peptides are neuropeptides. AQTFVRF-amide inhibits the activity of dissected pharyngeal myogenic muscle system. This is FMRFamide-like neuropeptides 16 from Caenorhabditis elegans.